The following is a 222-amino-acid chain: Ribonuclease HII (222 aa).

The RNase H type-2 domain maps to 17 to 206 (DLVAGVDEVG…VRAAHEARAS (190 aa)). Residues aspartate 23, glutamate 24, and aspartate 115 each coordinate a divalent metal cation.

The protein belongs to the RNase HII family. The cofactor is Mn(2+). Requires Mg(2+) as cofactor.

The protein resides in the cytoplasm. It catalyses the reaction Endonucleolytic cleavage to 5'-phosphomonoester.. Functionally, endonuclease that specifically degrades the RNA of RNA-DNA hybrids. The sequence is that of Ribonuclease HII from Pseudomonas savastanoi pv. phaseolicola (strain 1448A / Race 6) (Pseudomonas syringae pv. phaseolicola (strain 1448A / Race 6)).